The sequence spans 509 residues: MMDSALYHPRIFFAHSFINGLYSSPRFANTCWRLVSRSSWEIKASENSDRNVFDENPVRKTDGSLFDSASFETVDAEITPETDDFFVSDAEGDPDCPTQGYSSIELALQALRKGKFVIVVDDETGDVEGNLIMAATLTSPKDIAFLIKNGSGIVSVGMKKENLERLSLTLMSPEMEDEDSSAPTFTITVDAKSGTSTGVSASDRAMTVLALSSLDAKPDDFRRPGHVFPLKYRDGGVLRRAGHTEASVDLMILAGLRPLSVLSAILDQEDGSMASLPYMKKLATEHDIPIVSLTDLIRYRRKRDKLVERITVSRLPTKWGLFQAYCYRSKLDGTENIALVKGNVGNGEDILVRVHSECLTGDIFGSARCDCGNQLDLAMELIEKEGRGVVVYLRGHEGRGIGLGHKLRAYNLQDEGHDTVQANVELGLSIDSREYGIGAQMLRDIGVRTMRLMTNNPAKFTGLKGYGLAVVGRVPVVTPITKENRRYMETKRKKMGHIYISDNNDQPLA.

A chloroplast-targeting transit peptide spans 1–43; it reads MMDSALYHPRIFFAHSFINGLYSSPRFANTCWRLVSRSSWEIK. The tract at residues 44-302 is inactive DHBP synthase; the sequence is ASENSDRNVF…LTDLIRYRRK (259 aa). Residues 125-126 and 240-244 contribute to the D-ribulose 5-phosphate site; these read GD and RAGHT. Residues 303 to 509 are GTP cyclohydrolase II; it reads RDKLVERITV…ISDNNDQPLA (207 aa). 353–357 serves as a coordination point for GTP; sequence RVHSE. 3 residues coordinate Zn(2+): cysteine 358, cysteine 369, and cysteine 371. GTP-binding positions include glutamine 374, 397-399, and threonine 419; that span reads EGR. Aspartate 431 (proton acceptor; for GTP cyclohydrolase activity) is an active-site residue. Arginine 433 functions as the Nucleophile; for GTP cyclohydrolase activity in the catalytic mechanism. Residues threonine 454 and lysine 459 each coordinate GTP.

It in the N-terminal section; belongs to the DHBP synthase family. This sequence in the C-terminal section; belongs to the GTP cyclohydrolase II family. It depends on Zn(2+) as a cofactor. Expressed in leaves, shoots, roots, flowers and siliques.

It localises to the plastid. The protein localises to the chloroplast. It catalyses the reaction GTP + 4 H2O = 2,5-diamino-6-hydroxy-4-(5-phosphoribosylamino)-pyrimidine + formate + 2 phosphate + 3 H(+). Its pathway is cofactor biosynthesis; riboflavin biosynthesis; 5-amino-6-(D-ribitylamino)uracil from GTP: step 1/4. Functionally, involved in riboflavin biosynthesis. Catalyzes the conversion of GTP to 2,5-diamino-6-ribosylamino-4(3H)-pyrimidinone 5'-phosphate (DARP), formate and pyrophosphate. RIBA2 and RIBA3 together are not able to complement the loss of function of RIBA1. In Arabidopsis thaliana (Mouse-ear cress), this protein is Monofunctional riboflavin biosynthesis protein RIBA 3, chloroplastic (RIBA3).